A 504-amino-acid chain; its full sequence is Maturase K (504 aa).

This sequence belongs to the intron maturase 2 family. MatK subfamily.

Its subcellular location is the plastid. The protein resides in the chloroplast. Functionally, usually encoded in the trnK tRNA gene intron. Probably assists in splicing its own and other chloroplast group II introns. In Mentzelia laevicaulis (Blazing star), this protein is Maturase K.